The primary structure comprises 475 residues: Bifunctional protein HldE (475 aa).

The ribokinase stretch occupies residues M1–H321. N197 to E200 contributes to the ATP binding site. D266 is an active-site residue. The segment at M346 to N475 is cytidylyltransferase.

It in the N-terminal section; belongs to the carbohydrate kinase PfkB family. In the C-terminal section; belongs to the cytidylyltransferase family. Homodimer.

It catalyses the reaction D-glycero-beta-D-manno-heptose 7-phosphate + ATP = D-glycero-beta-D-manno-heptose 1,7-bisphosphate + ADP + H(+). The enzyme catalyses D-glycero-beta-D-manno-heptose 1-phosphate + ATP + H(+) = ADP-D-glycero-beta-D-manno-heptose + diphosphate. It functions in the pathway nucleotide-sugar biosynthesis; ADP-L-glycero-beta-D-manno-heptose biosynthesis; ADP-L-glycero-beta-D-manno-heptose from D-glycero-beta-D-manno-heptose 7-phosphate: step 1/4. It participates in nucleotide-sugar biosynthesis; ADP-L-glycero-beta-D-manno-heptose biosynthesis; ADP-L-glycero-beta-D-manno-heptose from D-glycero-beta-D-manno-heptose 7-phosphate: step 3/4. In terms of biological role, catalyzes the phosphorylation of D-glycero-D-manno-heptose 7-phosphate at the C-1 position to selectively form D-glycero-beta-D-manno-heptose-1,7-bisphosphate. Functionally, catalyzes the ADP transfer from ATP to D-glycero-beta-D-manno-heptose 1-phosphate, yielding ADP-D-glycero-beta-D-manno-heptose. The sequence is that of Bifunctional protein HldE from Coxiella burnetii (strain RSA 331 / Henzerling II).